The primary structure comprises 32 residues: Cytochrome b6-f complex subunit 6 (32 aa).

The helical transmembrane segment at isoleucine 4–threonine 26 threads the bilayer.

Belongs to the PetL family. In terms of assembly, the 4 large subunits of the cytochrome b6-f complex are cytochrome b6, subunit IV (17 kDa polypeptide, PetD), cytochrome f and the Rieske protein, while the 4 small subunits are PetG, PetL, PetM and PetN. The complex functions as a dimer.

It localises to the plastid. Its subcellular location is the chloroplast thylakoid membrane. Its function is as follows. Component of the cytochrome b6-f complex, which mediates electron transfer between photosystem II (PSII) and photosystem I (PSI), cyclic electron flow around PSI, and state transitions. PetL is important for photoautotrophic growth as well as for electron transfer efficiency and stability of the cytochrome b6-f complex. This chain is Cytochrome b6-f complex subunit 6, found in Tetradesmus obliquus (Green alga).